The primary structure comprises 481 residues: Zinc metalloproteinase/disintegrin (481 aa).

Residues 1-20 (MIQVLLVTICLAVFPYQGSS) form the signal peptide. Residues 21–190 (IILESGNVDD…KASQLYLTPE (170 aa)) constitute a propeptide that is removed on maturation. Residues 197–392 (RYIKLAIVVD…DNPQCILNAP (196 aa)) enclose the Peptidase M12B domain. Intrachain disulfides connect Cys308–Cys387, Cys349–Cys371, and Cys351–Cys354. His333 contacts Zn(2+). Residue Glu334 is part of the active site. The Zn(2+) site is built by His337 and His343. Residues 393–408 (LRTDTVSTPVSGNEFL) constitute a propeptide that is removed on maturation. Residues 400–481 (TPVSGNEFLE…ADCPRNGLYS (82 aa)) enclose the Disintegrin domain. 6 disulfides stabilise this stretch: Cys414–Cys429, Cys416–Cys424, Cys423–Cys446, Cys437–Cys443, Cys442–Cys467, and Cys455–Cys474. The Cell attachment site motif lies at 459–461 (RGD).

It belongs to the venom metalloproteinase (M12B) family. P-II subfamily. P-IIa sub-subfamily. In terms of assembly, monomer. Zn(2+) is required as a cofactor. As to expression, expressed by the venom gland.

Its subcellular location is the secreted. Its function is as follows. Impairs hemostasis in the envenomed animal. Functionally, inhibits platelet aggregation induced by ADP, thrombin, platelet-activating factor and collagen. Acts by inhibiting fibrinogen interaction with platelet receptors GPIIb/GPIIIa (ITGA2B/ITGB3). The polypeptide is Zinc metalloproteinase/disintegrin (Protobothrops elegans (Elegant pitviper)).